An 875-amino-acid polypeptide reads, in one-letter code: Phosphoenolpyruvate carboxylase (875 aa).

Active-site residues include histidine 137 and lysine 542.

It belongs to the PEPCase type 1 family. It depends on Mg(2+) as a cofactor.

It catalyses the reaction oxaloacetate + phosphate = phosphoenolpyruvate + hydrogencarbonate. Forms oxaloacetate, a four-carbon dicarboxylic acid source for the tricarboxylic acid cycle. The polypeptide is Phosphoenolpyruvate carboxylase (Pseudomonas putida (strain ATCC 47054 / DSM 6125 / CFBP 8728 / NCIMB 11950 / KT2440)).